Consider the following 315-residue polypeptide: uncharacterized protein (315 aa).

Residues 1 to 38 (MDVLLSLPQPELFKTTVIPFLANRNIIKSEAILSNLHS) lie on the Cytoplasmic side of the membrane. Residues 39-59 (IFYVAIFYHIWFLFGKWILFP) form a helical membrane-spanning segment. The Lumenal portion of the chain corresponds to 60 to 101 (HLVKWKLDYDQKHNVKKDEKTTSERQAQHYKKKYTSLINQSS). Positions 95-302 (SLINQSSVHL…MVSVAAKVLK (208 aa)) constitute a TLC domain. A helical membrane pass occupies residues 102–122 (VHLISLLQSIVVLYYSLKFLL). Topologically, residues 123–144 (DPKASAEPYQTSHSRVFTENRD) are cytoplasmic. A helical membrane pass occupies residues 145 to 165 (TQVICIFAIGYFVWDIYISTM). Topologically, residues 166–170 (YSTFP) are lumenal. A helical transmembrane segment spans residues 171–190 (FVVHGIISTVVFCIGLKPYI). Residues 191 to 225 (QYYAPVFLMFELSNPSLNFRWFGIKFLPQKSKFCS) are Cytoplasmic-facing. Residues 226–246 (LLLLLNNLTLMVVFFAARIAW) form a helical membrane-spanning segment. Topologically, residues 247 to 264 (GWFQIGKLCYDFYQVRNE) are lumenal. Residues 265–285 (PGFLVFDTIVILAGNFVLDIL) traverse the membrane as a helical segment. At 286-315 (NVIWFSTMVSVAAKVLKKGESVDKVTKNEQ) the chain is on the cytoplasmic side.

The protein localises to the endoplasmic reticulum membrane. This is an uncharacterized protein from Saccharomyces cerevisiae (strain ATCC 204508 / S288c) (Baker's yeast).